Here is a 407-residue protein sequence, read N- to C-terminus: Imidazolonepropionase (407 aa).

Fe(3+) is bound by residues His-72 and His-74. His-72 and His-74 together coordinate Zn(2+). Positions 81, 144, and 177 each coordinate 4-imidazolone-5-propanoate. Position 144 (Tyr-144) interacts with N-formimidoyl-L-glutamate. His-242 lines the Fe(3+) pocket. Position 242 (His-242) interacts with Zn(2+). A 4-imidazolone-5-propanoate-binding site is contributed by Gln-245. Asp-317 contacts Fe(3+). Residue Asp-317 coordinates Zn(2+). Residues Asn-319 and Gly-321 each contribute to the N-formimidoyl-L-glutamate site. Thr-322 contributes to the 4-imidazolone-5-propanoate binding site.

It belongs to the metallo-dependent hydrolases superfamily. HutI family. Zn(2+) is required as a cofactor. Fe(3+) serves as cofactor.

The protein resides in the cytoplasm. The enzyme catalyses 4-imidazolone-5-propanoate + H2O = N-formimidoyl-L-glutamate. The protein operates within amino-acid degradation; L-histidine degradation into L-glutamate; N-formimidoyl-L-glutamate from L-histidine: step 3/3. Its function is as follows. Catalyzes the hydrolytic cleavage of the carbon-nitrogen bond in imidazolone-5-propanoate to yield N-formimidoyl-L-glutamate. It is the third step in the universal histidine degradation pathway. The protein is Imidazolonepropionase of Rhizobium rhizogenes (Agrobacterium rhizogenes).